Consider the following 504-residue polypeptide: ATP synthase subunit alpha, chloroplastic (504 aa).

170 to 177 provides a ligand contact to ATP; it reads GDRQTGKT.

The protein belongs to the ATPase alpha/beta chains family. F-type ATPases have 2 components, CF(1) - the catalytic core - and CF(0) - the membrane proton channel. CF(1) has five subunits: alpha(3), beta(3), gamma(1), delta(1), epsilon(1). CF(0) has four main subunits: a, b, b' and c.

Its subcellular location is the plastid. It localises to the chloroplast thylakoid membrane. It catalyses the reaction ATP + H2O + 4 H(+)(in) = ADP + phosphate + 5 H(+)(out). In terms of biological role, produces ATP from ADP in the presence of a proton gradient across the membrane. The alpha chain is a regulatory subunit. The protein is ATP synthase subunit alpha, chloroplastic of Porphyra purpurea (Red seaweed).